The following is a 366-amino-acid chain: Probable S-adenosyl-L-methionine-binding protein AF_0433 (366 aa).

In terms of domain architecture, TsaA-like spans 6-136; sequence LRQVGVIRSP…YSSTIDSVGN (131 aa). S-adenosyl-L-methionine-binding positions include 23–25, 61–62, Arg-85, and 116–119; these read PHQ, DR, and LDGT.

Belongs to the tRNA methyltransferase O family.

This chain is Probable S-adenosyl-L-methionine-binding protein AF_0433, found in Archaeoglobus fulgidus (strain ATCC 49558 / DSM 4304 / JCM 9628 / NBRC 100126 / VC-16).